A 413-amino-acid polypeptide reads, in one-letter code: Putative competence-damage inducible protein (413 aa).

Belongs to the CinA family.

This is Putative competence-damage inducible protein from Thermoanaerobacter pseudethanolicus (strain ATCC 33223 / 39E) (Clostridium thermohydrosulfuricum).